The sequence spans 692 residues: ATP-dependent DNA helicase DinG (692 aa).

A Helicase ATP-binding domain is found at 16–293 (NLGNQLDNFI…AELAEYKKAA (278 aa)). 56 to 63 (AGTGIGKS) is an ATP binding site. Cys123 lines the [4Fe-4S] cluster pocket. A DEAH box motif is present at residues 134-137 (NNDQ). Cys192 and Cys202 together coordinate [4Fe-4S] cluster. Positions 247–250 (DEAH) match the DEAH box motif. Residues 514 to 692 (LIKTLPEYLE…PPFKRVIEYS (179 aa)) enclose the Helicase C-terminal domain.

The protein belongs to the helicase family. DinG subfamily. Type 1 sub-subfamily. It depends on [4Fe-4S] cluster as a cofactor.

It catalyses the reaction Couples ATP hydrolysis with the unwinding of duplex DNA at the replication fork by translocating in the 5'-3' direction. This creates two antiparallel DNA single strands (ssDNA). The leading ssDNA polymer is the template for DNA polymerase III holoenzyme which synthesizes a continuous strand.. It carries out the reaction ATP + H2O = ADP + phosphate + H(+). Its function is as follows. DNA-dependent ATPase and 5'-3' DNA helicase. Unwinds D-loops, R-loops, forked DNA and G-quadruplex DNA. The protein is ATP-dependent DNA helicase DinG of Photobacterium profundum (strain SS9).